Consider the following 314-residue polypeptide: Replication initiation protein (314 aa).

Basic and acidic residues predominate over residues 1 to 18 (MSKKAEEIQAKQSLEKEN). The disordered stretch occupies residues 1-25 (MSKKAEEIQAKQSLEKENSNFSKTG).

Belongs to the plasmid replication initiation factor family.

Its function is as follows. This protein is probably a specific topoisomerase involved in initiating replication. This protein is specifically required and may be rate-limiting for replication of the plasmid in vivo. This chain is Replication initiation protein (repE), found in Staphylococcus aureus.